The following is a 127-amino-acid chain: Glycine cleavage system H protein (127 aa).

In terms of domain architecture, Lipoyl-binding spans 24–106 (VVTVGVTFHA…YGAGWFFKLK (83 aa)). At Lys65 the chain carries N6-lipoyllysine.

The protein belongs to the GcvH family. The glycine cleavage system is composed of four proteins: P, T, L and H. (R)-lipoate is required as a cofactor.

Functionally, the glycine cleavage system catalyzes the degradation of glycine. The H protein shuttles the methylamine group of glycine from the P protein to the T protein. The sequence is that of Glycine cleavage system H protein from Laribacter hongkongensis (strain HLHK9).